Reading from the N-terminus, the 393-residue chain is Methylthioribose kinase (393 aa).

ATP-binding positions include Asn-38, Lys-53, and 107-109; that span reads EDL. Asp-225 is a binding site for substrate. 242–244 serves as a coordination point for ATP; sequence DPE. Arg-332 is a substrate binding site.

It belongs to the methylthioribose kinase family. As to quaternary structure, homodimer.

It carries out the reaction 5-(methylsulfanyl)-D-ribose + ATP = 5-(methylsulfanyl)-alpha-D-ribose 1-phosphate + ADP + H(+). Its pathway is amino-acid biosynthesis; L-methionine biosynthesis via salvage pathway; S-methyl-5-thio-alpha-D-ribose 1-phosphate from S-methyl-5'-thioadenosine (hydrolase route): step 2/2. Catalyzes the phosphorylation of methylthioribose into methylthioribose-1-phosphate. The sequence is that of Methylthioribose kinase from Bacillus anthracis (strain A0248).